Reading from the N-terminus, the 1075-residue chain is MRLDENEGAFTIPEFGKIQFEGFCRFIDQGLMEELHNFPKIEDIDKEIEFRLFGNEYELAEPFIKERDAVYQSLTYYSELYVPARSIRRNSRKIQKQTVFLGNIPLMNSHGTFVVNGIYRVVVNQILISPGIYYRSELDHNRINYIYTGTLISDWGRRSKLEIDVGERIWARVSRKQKISIPVLLSAMGLNLEEILDNTRYPERFLFLLKKKGRWEREEYLWSREKAILEFYKKLYCISGDLVFSESLCKELQKKFFRKRCELGKIGRRNLNQKLNLDIPENEIFSLPQDVLAAVDYLIGVKFGMGTLDDIDHLRNRRIRSVADLLQNQFRLALGRLEDAVKRTIRRATKRRSTPQNLVTSTLLKNTFQDFFGSHPLSQFLDQTNPLTEIAHGRKLSHLGPGGLTGRTASFRTRDIHPSYYGRICPIDTSEGMNAGLVASLSIHAKIGDCGSLQSPFYKISERSREEHMVYLLPGEDEDEYYRIATGNSLALNQGIQEEQITPARYRQEFIVIAWEQIHFRSIFPFQYFSVGVSLIPFLEHNDANRALMGSNMQRQAVPLFRPEKCIAGTGLEGQAALDSGSVAIATQEGRIEYIDAVNITSSVNGDTVRTESVIYQRSNTNTCTHQKPQIHQGECVKKGQILADGATTVGGELSLGKNVLVAYMPWEGYNFEDAILISERLVYEDIYTSFHIVRYRIEICMTSQGPERITREIPHLDAHLLRHLDENGLVMLGSWIETGDVLVGKLTPQTIEESLCTPEGRLLQTIFGIEVSTARENCLRAPIGGRGRVIDVRWINRVDDSGDNAETVHVYISQKRKIQVGDKVSGRHGNKGIISIVLPRQDMPYLQNGIPVDMVLNPLGVPSRMNVGQIFECLPGLAGNPMNKHYRITPFDEKYEREASRKLVFPELYKASEQTANPWVFEPDHPGKHRLIDGRTGDVFEQPVTIGKAYMSKLSHQVDEKIHARSSGPYARVTQQPLRGKSKRGGQRIGEMEVWALEGFGVAYILQEMLTLKSDHIRTRNEVLGAIITGGPIPKPDTAPESFRLLIRELRSLALELNHAIISEKNFQIDREEV.

The protein belongs to the RNA polymerase beta chain family. In plastids the minimal PEP RNA polymerase catalytic core is composed of four subunits: alpha, beta, beta', and beta''. When a (nuclear-encoded) sigma factor is associated with the core the holoenzyme is formed, which can initiate transcription.

The protein resides in the plastid. It is found in the chloroplast. It carries out the reaction RNA(n) + a ribonucleoside 5'-triphosphate = RNA(n+1) + diphosphate. Functionally, DNA-dependent RNA polymerase catalyzes the transcription of DNA into RNA using the four ribonucleoside triphosphates as substrates. This is DNA-directed RNA polymerase subunit beta from Pinus thunbergii (Japanese black pine).